Here is a 380-residue protein sequence, read N- to C-terminus: Erythronate-4-phosphate dehydrogenase (380 aa).

Residues Ser-45 and Thr-66 each coordinate substrate. NAD(+)-binding positions include Gln-126–Val-127, Asp-146, Thr-174, Ala-205–Arg-207, and Asp-231. Arg-207 is an active-site residue. Residue Glu-236 is part of the active site. Catalysis depends on His-253, which acts as the Proton donor. Gly-256 serves as a coordination point for NAD(+). Tyr-257 is a binding site for substrate.

This sequence belongs to the D-isomer specific 2-hydroxyacid dehydrogenase family. PdxB subfamily. As to quaternary structure, homodimer.

The protein resides in the cytoplasm. It carries out the reaction 4-phospho-D-erythronate + NAD(+) = (R)-3-hydroxy-2-oxo-4-phosphooxybutanoate + NADH + H(+). Its pathway is cofactor biosynthesis; pyridoxine 5'-phosphate biosynthesis; pyridoxine 5'-phosphate from D-erythrose 4-phosphate: step 2/5. Functionally, catalyzes the oxidation of erythronate-4-phosphate to 3-hydroxy-2-oxo-4-phosphonooxybutanoate. The protein is Erythronate-4-phosphate dehydrogenase of Pseudomonas syringae pv. tomato (strain ATCC BAA-871 / DC3000).